The following is a 313-amino-acid chain: Pseudouridine-5'-phosphate glycosidase (313 aa).

Glu-34 functions as the Proton donor in the catalytic mechanism. Substrate contacts are provided by Lys-95 and Val-115. Residue Asp-147 coordinates Mn(2+). 149–151 contacts substrate; it reads SAD. Lys-168 functions as the Nucleophile in the catalytic mechanism.

The protein belongs to the pseudouridine-5'-phosphate glycosidase family. In terms of assembly, homotrimer. Requires Mn(2+) as cofactor.

The catalysed reaction is D-ribose 5-phosphate + uracil = psi-UMP + H2O. In terms of biological role, catalyzes the reversible cleavage of pseudouridine 5'-phosphate (PsiMP) to ribose 5-phosphate and uracil. Functions biologically in the cleavage direction, as part of a pseudouridine degradation pathway. This chain is Pseudouridine-5'-phosphate glycosidase, found in Deinococcus radiodurans (strain ATCC 13939 / DSM 20539 / JCM 16871 / CCUG 27074 / LMG 4051 / NBRC 15346 / NCIMB 9279 / VKM B-1422 / R1).